Here is a 306-residue protein sequence, read N- to C-terminus: Ubiquitin-conjugating enzyme E2Q-like protein CG4502 (306 aa).

Positions 18 to 77 (HKSSNNNNNNNNNHNNNINNNNNNDKVDGATGSSPNINNNNNNNNNNNNHDGAAAPSSAG) are disordered. 2 stretches are compositionally biased toward low complexity: residues 22 to 41 (NNNNNNNNNHNNNINNNNNN) and 53 to 77 (NINNNNNNNNNNNNHDGAAAPSSAG). A UBC core domain is found at 138-299 (IRTRRLMKEY…VKTHEKYGWV (162 aa)). Residue cysteine 234 is the Glycyl thioester intermediate of the active site.

The protein belongs to the ubiquitin-conjugating enzyme family.

It catalyses the reaction S-ubiquitinyl-[E1 ubiquitin-activating enzyme]-L-cysteine + [E2 ubiquitin-conjugating enzyme]-L-cysteine = [E1 ubiquitin-activating enzyme]-L-cysteine + S-ubiquitinyl-[E2 ubiquitin-conjugating enzyme]-L-cysteine.. Its pathway is protein modification; protein ubiquitination. Catalyzes the covalent attachment of ubiquitin to other proteins. The polypeptide is Ubiquitin-conjugating enzyme E2Q-like protein CG4502 (Drosophila melanogaster (Fruit fly)).